The chain runs to 310 residues: Olfactory receptor 8I2 (310 aa).

Topologically, residues 1-25 (MAGNNFTEVTVFILSGFANHPELQV) are extracellular. A glycan (N-linked (GlcNAc...) asparagine) is linked at N5. The helical transmembrane segment at 26–46 (SLFLMFLFIYLFTVLGNLGLI) threads the bilayer. At 47–54 (TLIRMDSQ) the chain is on the cytoplasmic side. The chain crosses the membrane as a helical span at residues 55 to 75 (LHTPMYFFLSNLAFIDIFYSS). The Extracellular portion of the chain corresponds to 76 to 99 (TVTPKALVNFQSNRRSISFVGCFV). A disulfide bridge connects residues C97 and C188. The helical transmembrane segment at 100 to 120 (QMYFFVGLVCCECFLLGSMAY) threads the bilayer. The Cytoplasmic portion of the chain corresponds to 121-139 (NRYIAICNPLLYSVVMSQK). The chain crosses the membrane as a helical span at residues 140 to 160 (VSNWLGVMPYVIGFTSSLISV). Residues 161 to 196 (WVISSLAFCDSSINHFFCDTTALLALSCVDTFGTEM) are Extracellular-facing. The chain crosses the membrane as a helical span at residues 197 to 216 (VSFVLAGFTLLSSLLIITVT). Over 217–236 (YIIIISAILRIQSAAGRQKA) the chain is Cytoplasmic. A helical membrane pass occupies residues 237–257 (FSTCASHLMAVTIFYGSLIFT). Residues 258-270 (YLQPDNTSSLTQA) are Extracellular-facing. The helical transmembrane segment at 271-291 (QVASVFYTIVIPMLNPLIYSL) threads the bilayer. Topologically, residues 292-310 (RNKDVKNALLRVIHRKLFP) are cytoplasmic.

This sequence belongs to the G-protein coupled receptor 1 family.

The protein localises to the cell membrane. In terms of biological role, odorant receptor. The protein is Olfactory receptor 8I2 (OR8I2) of Homo sapiens (Human).